Reading from the N-terminus, the 197-residue chain is Pyridoxal 5'-phosphate synthase subunit PdxT (197 aa).

L-glutamine is bound at residue 52–54 (GES). The active-site Nucleophile is cysteine 84. L-glutamine contacts are provided by residues arginine 111 and 139–140 (IR). Active-site charge relay system residues include histidine 175 and glutamate 177.

It belongs to the glutaminase PdxT/SNO family. As to quaternary structure, in the presence of PdxS, forms a dodecamer of heterodimers. Only shows activity in the heterodimer.

The enzyme catalyses aldehydo-D-ribose 5-phosphate + D-glyceraldehyde 3-phosphate + L-glutamine = pyridoxal 5'-phosphate + L-glutamate + phosphate + 3 H2O + H(+). The catalysed reaction is L-glutamine + H2O = L-glutamate + NH4(+). It participates in cofactor biosynthesis; pyridoxal 5'-phosphate biosynthesis. In terms of biological role, catalyzes the hydrolysis of glutamine to glutamate and ammonia as part of the biosynthesis of pyridoxal 5'-phosphate. The resulting ammonia molecule is channeled to the active site of PdxS. This Halorubrum lacusprofundi (strain ATCC 49239 / DSM 5036 / JCM 8891 / ACAM 34) protein is Pyridoxal 5'-phosphate synthase subunit PdxT.